Reading from the N-terminus, the 150-residue chain is Histone H3-like centromeric protein A (150 aa).

The interval 1–56 (MRPGSTPASRRKSRPPRRVSPPLPTTSTRSPGRPSAPEQRKAPRATPKKRFRPGTR) is disordered. Positions 25–37 (TTSTRSPGRPSAP) are enriched in low complexity. Residues 42-53 (APRATPKKRFRP) show a composition bias toward basic residues. Positions 53-150 (PGTRALMEIR…RIRGVTEGLG (98 aa)) are H3-like.

It belongs to the histone H3 family. As to quaternary structure, component of centromeric nucleosomes, where DNA is wrapped around a histone octamer core. The octamer contains two molecules each of H2A, H2B, CENPA and H4 assembled in one CENPA-H4 heterotetramer and two H2A-H2B heterodimers. CENPA modulates the DNA-binding characteristics of nucleosomes so that protruding DNA ends have higher flexibility than in nucleosomes containing conventional histone H3.

Its subcellular location is the nucleus. It localises to the chromosome. The protein localises to the centromere. Histone H3-like nucleosomal protein that is specifically found in centromeric nucleosomes. Replaces conventional H3 in the nucleosome core of centromeric chromatin that serves as an assembly site for the inner kinetochore. The presence of CENPA subtly modifies the nucleosome structure and the way DNA is wrapped around the nucleosome and gives rise to protruding DNA ends that are less well-ordered and rigid compared to nucleosomes containing histone H3. May serve as an epigenetic mark that propagates centromere identity through replication and cell division. Required for recruitment and assembly of kinetochore proteins, and as a consequence required for progress through mitosis, chromosome segregation and cytokinesis. The sequence is that of Histone H3-like centromeric protein A (cenpa) from Xenopus tropicalis (Western clawed frog).